The chain runs to 319 residues: MATKGGTVKAASGFNAMEDAQTLRKAMKGLGTDEDAIISVLAYRNTAQRQEIRTAYKSTIGRDLIDDLKSELSGNFEQVIVGMMTPTVLYDVQELRRAMKGAGTDEGCLIEILASRTPEEIRRISQTYQQQYGRSLEDDIRSDTSFMFQRVLVSLSAGGRDEGNYLDDALVRQDAQDLYEAGEKKWGTDEVKFLTVLCSRNRNHLLHVFDEYKRISQKDIEQSIKSETSGSFEDALLAIVKCMRNKSAYFAEKLYKSMKGLGTDDNTLIRVMVSRAEIDMLDIRAHFKRLYGKSLYSFIKGDTSGDYRKVLLVLCGGDD.

An N-acetylalanine modification is found at A2. The residue at position 7 (T7) is a Phosphothreonine. Residue S12 is modified to Phosphoserine. Annexin repeat units lie at residues 14–85 (FNAM…GMMT), 86–157 (PTVL…SLSA), 169–241 (ALVR…AIVK), and 245–316 (NKSA…VLCG). Residues K213, K293, and K300 each carry the N6-acetyllysine modification.

The protein belongs to the annexin family.

It is found in the zymogen granule membrane. Functionally, calcium/phospholipid-binding protein which promotes membrane fusion and is involved in exocytosis. This chain is Annexin A4, found in Homo sapiens (Human).